Here is a 1246-residue protein sequence, read N- to C-terminus: HMG2-induced ER-remodeling protein 1 (1246 aa).

Disordered regions lie at residues 19 to 241, 263 to 288, and 816 to 836; these read KGKR…GSLT, HHIQSHHSSGREQDSPHSESSDLPPI, and MPDASKISDSTDEPDKSKDEK. Residues 27–41 are compositionally biased toward low complexity; it reads KSAASTRTSEATTTS. Residues 58–95 show a composition bias toward polar residues; it reads TIASPQRPLSGQNVNNELSNSKPAVSAEKVSQQGQVPT. Position 102 is a phosphoserine (Ser-102). Thr-128 carries the post-translational modification Phosphothreonine. Composition is skewed to low complexity over residues 154-163 and 211-230; these read RSSSISTSLN and SKISTPTSTPTTASSKPSSS. The segment covering 271-282 has biased composition (basic and acidic residues); it reads SGREQDSPHSES. Ser-277 is subject to Phosphoserine. Ser-1013 carries the post-translational modification Phosphoserine. 2 stretches are compositionally biased toward polar residues: residues 1109–1133 and 1200–1215; these read SSRHNSGLPSSANSSRISGSLTPDS and SRSPSNDSLQESQQKA. Disordered regions lie at residues 1109–1157 and 1192–1224; these read SSRH…LPKI and SLYGDELNSRSPSNDSLQESQQKAPLQRPLVED. Thr-1130 bears the Phosphothreonine mark. Residues Ser-1200, Ser-1204, and Ser-1207 each carry the phosphoserine modification.

It belongs to the GIP3/HER1 family. As to quaternary structure, may interact with ribosomes.

The protein resides in the cytoplasm. In terms of biological role, required for HMG2-induced endoplasmic reticulum-remodeling. This Saccharomyces cerevisiae (strain ATCC 204508 / S288c) (Baker's yeast) protein is HMG2-induced ER-remodeling protein 1 (HER1).